Here is a 162-residue protein sequence, read N- to C-terminus: GDNILKVDSFLTHQVDFSLMREIGKVFAEKFASAGITKVVTIEASGIAPAVFTAEALNVPMIFAKKAKNITMNEGILTAQVYSFTKQVTSTVSIAGKFLSPEDKVLIIDDFLANGQAAKGLIQIIEQAGATVEAIGIVIEKSFQDGRDLLEKAGYPVLSLAR.

Xanthine contacts are provided by leucine 5 and threonine 12. 113–117 (ANGQA) is a 5-phospho-alpha-D-ribose 1-diphosphate binding site. Lysine 141 provides a ligand contact to xanthine.

Belongs to the purine/pyrimidine phosphoribosyltransferase family. Xpt subfamily. As to quaternary structure, homodimer.

It localises to the cytoplasm. It carries out the reaction XMP + diphosphate = xanthine + 5-phospho-alpha-D-ribose 1-diphosphate. It participates in purine metabolism; XMP biosynthesis via salvage pathway; XMP from xanthine: step 1/1. Its function is as follows. Converts the preformed base xanthine, a product of nucleic acid breakdown, to xanthosine 5'-monophosphate (XMP), so it can be reused for RNA or DNA synthesis. The protein is Xanthine phosphoribosyltransferase (xpt) of Streptococcus mitis.